Here is a 61-residue protein sequence, read N- to C-terminus: Potassium channel toxin alpha-KTx 3.18 (61 aa).

The N-terminal stretch at 1-23 is a signal peptide; it reads MKMFFTVLVTLFVCSMIIGICEG. 3 disulfides stabilise this stretch: Cys30–Cys50, Cys36–Cys55, and Cys40–Cys57. Residue Lys60 is modified to Lysine amide.

As to expression, expressed by the venom gland.

The protein localises to the secreted. Inhibits voltage-gated potassium channel rKv1.1/KCNA1 at nanomolar ranges (IC(50)=90 +-2 nM, reduction of current by 30% at 50 nM or toxin). The chain is Potassium channel toxin alpha-KTx 3.18 from Mesobuthus eupeus (Lesser Asian scorpion).